The chain runs to 197 residues: 3-isopropylmalate dehydratase small subunit (197 aa).

Belongs to the LeuD family. LeuD type 1 subfamily. In terms of assembly, heterodimer of LeuC and LeuD.

The enzyme catalyses (2R,3S)-3-isopropylmalate = (2S)-2-isopropylmalate. It functions in the pathway amino-acid biosynthesis; L-leucine biosynthesis; L-leucine from 3-methyl-2-oxobutanoate: step 2/4. Its function is as follows. Catalyzes the isomerization between 2-isopropylmalate and 3-isopropylmalate, via the formation of 2-isopropylmaleate. In Geobacillus sp. (strain WCH70), this protein is 3-isopropylmalate dehydratase small subunit.